Consider the following 211-residue polypeptide: LexA repressor (211 aa).

The segment at residues 30 to 50 (RVEIAREIGFKSPNAAEEHLK) is a DNA-binding region (H-T-H motif). Catalysis depends on for autocatalytic cleavage activity residues Ser128 and Lys165.

This sequence belongs to the peptidase S24 family. As to quaternary structure, homodimer.

The catalysed reaction is Hydrolysis of Ala-|-Gly bond in repressor LexA.. Represses a number of genes involved in the response to DNA damage (SOS response), including recA and lexA. In the presence of single-stranded DNA, RecA interacts with LexA causing an autocatalytic cleavage which disrupts the DNA-binding part of LexA, leading to derepression of the SOS regulon and eventually DNA repair. The protein is LexA repressor of Haemophilus ducreyi (strain 35000HP / ATCC 700724).